The sequence spans 796 residues: Conidiophore development regulator abaA (796 aa).

Positions 133–207 (GKDGEPVWSD…QVLDSFLKGD (75 aa)) form a DNA-binding region, TEA. The segment at 215-254 (REQSDRSTAQTQPVGPRWRTSMDHLPSSHYGTHATSSYPE) is disordered. The segment covering 243–252 (HYGTHATSSY) has biased composition (polar residues). Positions 341 to 362 (LSDVNDPLNCEIILLETNLELM) are leucine-zipper-like. Residues 612–643 (EGLSDKTAPTSVLDPFPNLTQQTTSQTAGINV) form a disordered region. Residues 629–643 (NLTQQTTSQTAGINV) show a composition bias toward polar residues.

This sequence belongs to the TEC1 family.

The protein localises to the nucleus. Functionally, brlA, abaA and wetA are pivotal regulators of conidiophore development and conidium maturation. They act individually and together to regulate their own expression and that of numerous other sporulation-specific gene. Controls temporal and spatial specificity in Aspergillus development. Directs the differentiation of phialides and is continuously required for maintenance of their function. Expression of abaA leads to activation of brlA and wetA, cessation of vegetative growth, and accentuated cellular vacuolization. Binds to the sequence 5'-CATTCY-3', where Y is a pyrimidine, making both major- and minor-groove contacts. Multiple abaA binding sites are present in the cis-acting regulatory regions of several developmentally controlled structural genes as well as those of the upstream regulatory gene brlA, the downstream regulatory gene wetA, and abaA itself. This Emericella nidulans (strain FGSC A4 / ATCC 38163 / CBS 112.46 / NRRL 194 / M139) (Aspergillus nidulans) protein is Conidiophore development regulator abaA.